The following is a 339-amino-acid chain: F420-dependent glucose-6-phosphate dehydrogenase (339 aa).

A coenzyme F420-(gamma-Glu)n-binding site is contributed by D41. H42 (proton donor) is an active-site residue. Coenzyme F420-(gamma-Glu)n contacts are provided by residues T78 and 109–110 (TG). The active-site Proton acceptor is the E111. Residues N114, 177–178 (SG), and 180–181 (AA) contribute to the coenzyme F420-(gamma-Glu)n site. Residues T195, K198, K259, and R283 each contribute to the substrate site.

The protein belongs to the F420-dependent glucose-6-phosphate dehydrogenase family. In terms of assembly, homodimer.

The enzyme catalyses oxidized coenzyme F420-(gamma-L-Glu)(n) + D-glucose 6-phosphate + H(+) = 6-phospho-D-glucono-1,5-lactone + reduced coenzyme F420-(gamma-L-Glu)(n). Catalyzes the coenzyme F420-dependent oxidation of glucose 6-phosphate (G6P) to 6-phosphogluconolactone. The chain is F420-dependent glucose-6-phosphate dehydrogenase from Nakamurella multipartita (strain ATCC 700099 / DSM 44233 / CIP 104796 / JCM 9543 / NBRC 105858 / Y-104) (Microsphaera multipartita).